The sequence spans 139 residues: MFEAINSVDNRVIRRSEEQEKSTLMAEYNKALRTLDVGPFLKYRVKHDVNLGLHRKATGYLISNYTIKKTLEEVESNVERYRLLDHRESLFNMARRNITEARNFVRARKLLNIARERGFFYNELYELEELLDHEWCPET.

This is an uncharacterized protein from Encephalitozoon cuniculi (strain GB-M1) (Microsporidian parasite).